The chain runs to 170 residues: Sec-independent protein translocase protein TATA, chloroplastic (170 aa).

The N-terminal 61 residues, 1–61 (MGIPVVVPVA…GGSGGDLAAV (61 aa)), are a transit peptide targeting the chloroplast. Residues 62–84 (AASVAARPRRAGSGGGGALGCKC) are Lumenal-facing. The helical transmembrane segment at 85-105 (LFGLGVPELAVIAGVAALVFG) threads the bilayer. The Stromal portion of the chain corresponds to 106-170 (PKQLPEIGRS…LEASSSKESA (65 aa)). Residues 130-139 (FETELKKEPG) are compositionally biased toward basic and acidic residues. Positions 130-170 (FETELKKEPGEGGDQPPPATPTAVSGGEEKGLEASSSKESA) are disordered.

It belongs to the TatA/E family. In terms of assembly, in thylakoid membranes, TATC and TATB form a large receptor complex, containing about eight TATC-TATB pairs, which binds the precursor protein. Twin arginine signal peptide promotes pH-triggered docking of TATA oligomers to TATC-TATB receptor complex, inducing a conformational switch of TATA that results in activation of the translocase. TATA dissociates from TATC-TATB upon completion of translocation.

It localises to the plastid. Its subcellular location is the chloroplast thylakoid membrane. Its function is as follows. Part of the twin-arginine translocation (Tat) system that transports large folded proteins containing a characteristic twin-arginine motif in their signal peptide across the thylakoid membrane. Involved in delta pH-dependent protein transport required for chloroplast development, especially thylakoid membrane formation. TATC and TATB mediate precursor recognition, whereas TATA facilitates translocation. This chain is Sec-independent protein translocase protein TATA, chloroplastic, found in Zea mays (Maize).